A 381-amino-acid chain; its full sequence is Outer membrane protein assembly factor BamB (381 aa).

An N-terminal signal peptide occupies residues 1-22; that stretch reads MNLLKRYAAPVACAAAVLVFAA. C23 carries the N-palmitoyl cysteine lipid modification. Residue C23 is the site of S-diacylglycerol cysteine attachment.

The protein belongs to the BamB family. Part of the Bam complex.

It localises to the cell outer membrane. Its function is as follows. Part of the outer membrane protein assembly complex, which is involved in assembly and insertion of beta-barrel proteins into the outer membrane. This Burkholderia pseudomallei (strain K96243) protein is Outer membrane protein assembly factor BamB.